The primary structure comprises 506 residues: Glutamate--tRNA ligase (506 aa).

The 'HIGH' region motif lies at 21–31; the sequence is PSPTGTPHVGM. Positions 265-269 match the 'KMSKS' region motif; the sequence is KLSKR. Lysine 268 lines the ATP pocket.

The protein belongs to the class-I aminoacyl-tRNA synthetase family. Glutamate--tRNA ligase type 1 subfamily. Monomer.

The protein localises to the cytoplasm. The enzyme catalyses tRNA(Glu) + L-glutamate + ATP = L-glutamyl-tRNA(Glu) + AMP + diphosphate. Its function is as follows. Catalyzes the attachment of glutamate to tRNA(Glu) in a two-step reaction: glutamate is first activated by ATP to form Glu-AMP and then transferred to the acceptor end of tRNA(Glu). In Bifidobacterium longum (strain DJO10A), this protein is Glutamate--tRNA ligase.